The chain runs to 222 residues: ATP synthase F(0) complex subunit a (222 aa).

6 helical membrane-spanning segments follow: residues 7–27 (AFFDVPVGTMMLAIAFPAILL), 64–84 (WSLMLITLTLFIGLTNLLGLL), 93–113 (QLTVNLSMAIPLWTGTVVLGF), 132–152 (FLIPMIIIIETISLLIRPITL), 160–180 (ITAGHLLIHLTGSAALTLLSV), and 197–219 (ILELAVALIQAYVFALLISLYLH).

The protein belongs to the ATPase A chain family. As to quaternary structure, component of the ATP synthase complex composed at least of ATP5F1A/subunit alpha, ATP5F1B/subunit beta, ATP5MC1/subunit c (homooctomer), MT-ATP6/subunit a, MT-ATP8/subunit 8, ATP5ME/subunit e, ATP5MF/subunit f, ATP5MG/subunit g, ATP5MK/subunit k, ATP5MJ/subunit j, ATP5F1C/subunit gamma, ATP5F1D/subunit delta, ATP5F1E/subunit epsilon, ATP5PF/subunit F6, ATP5PB/subunit b, ATP5PD/subunit d, ATP5PO/subunit OSCP. ATP synthase complex consists of a soluble F(1) head domain (subunits alpha(3) and beta(3)) - the catalytic core - and a membrane F(0) domain - the membrane proton channel (subunits c, a, 8, e, f, g, k and j). These two domains are linked by a central stalk (subunits gamma, delta, and epsilon) rotating inside the F1 region and a stationary peripheral stalk (subunits F6, b, d, and OSCP). Interacts with DNAJC30; interaction is direct.

It localises to the mitochondrion inner membrane. It catalyses the reaction H(+)(in) = H(+)(out). Functionally, subunit a, of the mitochondrial membrane ATP synthase complex (F(1)F(0) ATP synthase or Complex V) that produces ATP from ADP in the presence of a proton gradient across the membrane which is generated by electron transport complexes of the respiratory chain. ATP synthase complex consist of a soluble F(1) head domain - the catalytic core - and a membrane F(1) domain - the membrane proton channel. These two domains are linked by a central stalk rotating inside the F(1) region and a stationary peripheral stalk. During catalysis, ATP synthesis in the catalytic domain of F(1) is coupled via a rotary mechanism of the central stalk subunits to proton translocation. With the subunit c (ATP5MC1), forms the proton-conducting channel in the F(0) domain, that contains two crucial half-channels (inlet and outlet) that facilitate proton movement from the mitochondrial intermembrane space (IMS) into the matrix. Protons are taken up via the inlet half-channel and released through the outlet half-channel, following a Grotthuss mechanism. This Elephas maximus (Indian elephant) protein is ATP synthase F(0) complex subunit a.